We begin with the raw amino-acid sequence, 535 residues long: Flavin-containing monooxygenase 2 (535 aa).

At Ala2 the chain carries N-acetylalanine. FAD-binding positions include 9 to 13, Glu32, 40 to 41, and 61 to 62; these read GAGVS, VW, and NT. Residues 60–61 and 195–198 contribute to the NADP(+) site; these read TN and SGSD. Lys492 is covalently cross-linked (Glycyl lysine isopeptide (Lys-Gly) (interchain with G-Cter in SUMO)). A helical membrane pass occupies residues 510–530; sequence FSVSFLLKILGLLAVVVAFFC.

It belongs to the FMO family. Requires FAD as cofactor. The cofactor is Mg(2+). In terms of tissue distribution, expressed in lung (at protein level). Expressed predominantly in lung, and at a much lesser extent in kidney. Also expressed in fetal lung, but not in liver, kidney and brain.

The protein resides in the microsome membrane. The protein localises to the endoplasmic reticulum membrane. Catalyzes the oxidative metabolism of numerous xenobiotics, including mainly therapeutic drugs and insecticides that contain a soft nucleophile, most commonly nitrogen and sulfur and participates to their bioactivation. Specifically catalyzes S-oxygenation of sulfur derived compounds such as thioureas-derived compounds, thioetherorganophosphates to their sulfenic acid. In vitro, catalyzes S-oxygenation of the second-line antitubercular drugs thiacetazone (TAZ) and ethionamide (ETA), forming a sulfinic acid and a carbodiimide via a postulated sulfenic acid intermediate. Also catalyzes S-oxygenation of the thioether-containing organophosphate insecticides, phorate and disulfoton. The sequence is that of Flavin-containing monooxygenase 2 from Homo sapiens (Human).